Consider the following 174-residue polypeptide: Envelope glycoprotein (174 aa).

The Extracellular portion of the chain corresponds to 1–121; the sequence is VAAAQALREI…EWAVHLLKGL (121 aa). Residues 4–54 adopt a coiled-coil conformation; it reads AQALREIERLACWSVKQANLTTSLLGDLLDDVTSIRHAVLQNRAAIDFLLL. An intrachain disulfide couples Cys-60 to Cys-67. Positions 72–102 form a coiled coil; that stretch reads SDHSESIQKKFQLMKEHVNKIGVDSDPIGSW. A helical transmembrane segment spans residues 122-142; it reads LLGLVVILLLVVCLPCLLQFV. 2 S-palmitoyl cysteine; by host lipidation sites follow: Cys-134 and Cys-137. Residues 143–174 lie on the Cytoplasmic side of the membrane; sequence SSSIRKMIDNSLGYREERKKFQEAYKQPERVV.

It belongs to the Alpharetroviruses envelope glycoprotein family. Heterodimer with the surface protein. The mature envelope protein (Env) consists of a trimer of SU-TM heterodimers attached by a labile interchain disulfide bond. Post-translationally, specific enzymatic cleavages in vivo yield mature proteins. Envelope glycoproteins are synthesized as an inactive precursor that is N-glycosylated and processed likely by host cell furin or by a furin-like protease in the Golgi to yield the mature SU and TM proteins. The cleavage site between SU and TM requires the minimal sequence [KR]-X-[KR]-R. In terms of processing, the transmembrane protein is palmitoylated. Palmitoylation is necessary for glycoprotein function and infectivity.

The protein localises to the virion membrane. It is found in the host cell membrane. Functionally, the transmembrane protein (TM) acts as a class I viral fusion protein. Under the current model, the protein has at least 3 conformational states: pre-fusion native state, pre-hairpin intermediate state, and post-fusion hairpin state. During viral and target cell membrane fusion, the coiled coil regions (heptad repeats) assume a trimer-of-hairpins structure, positioning the fusion peptide in close proximity to the C-terminal region of the ectodomain. The formation of this structure appears to drive apposition and subsequent fusion of viral and target cell membranes. Membranes fusion leads to delivery of the nucleocapsid into the cytoplasm. This is Envelope glycoprotein (env) from UR2 avian sarcoma virus (UR2SV).